A 312-amino-acid polypeptide reads, in one-letter code: Aspartate carbamoyltransferase catalytic subunit (312 aa).

Carbamoyl phosphate is bound by residues arginine 55 and threonine 56. An L-aspartate-binding site is contributed by lysine 83. The carbamoyl phosphate site is built by arginine 105, histidine 138, and glutamine 141. Positions 171 and 225 each coordinate L-aspartate. Positions 266 and 267 each coordinate carbamoyl phosphate.

The protein belongs to the aspartate/ornithine carbamoyltransferase superfamily. ATCase family. Heterododecamer (2C3:3R2) of six catalytic PyrB chains organized as two trimers (C3), and six regulatory PyrI chains organized as three dimers (R2).

It carries out the reaction carbamoyl phosphate + L-aspartate = N-carbamoyl-L-aspartate + phosphate + H(+). It participates in pyrimidine metabolism; UMP biosynthesis via de novo pathway; (S)-dihydroorotate from bicarbonate: step 2/3. Functionally, catalyzes the condensation of carbamoyl phosphate and aspartate to form carbamoyl aspartate and inorganic phosphate, the committed step in the de novo pyrimidine nucleotide biosynthesis pathway. The sequence is that of Aspartate carbamoyltransferase catalytic subunit from Corynebacterium glutamicum (strain ATCC 13032 / DSM 20300 / JCM 1318 / BCRC 11384 / CCUG 27702 / LMG 3730 / NBRC 12168 / NCIMB 10025 / NRRL B-2784 / 534).